The following is a 173-amino-acid chain: Ribosome maturation factor RimM (173 aa).

Positions 102-173 (EGEYYWSDLI…TMLVDWDPEF (72 aa)) constitute a PRC barrel domain.

The protein belongs to the RimM family. Binds ribosomal protein uS19.

The protein resides in the cytoplasm. An accessory protein needed during the final step in the assembly of 30S ribosomal subunit, possibly for assembly of the head region. Essential for efficient processing of 16S rRNA. May be needed both before and after RbfA during the maturation of 16S rRNA. It has affinity for free ribosomal 30S subunits but not for 70S ribosomes. The protein is Ribosome maturation factor RimM of Methylobacillus flagellatus (strain ATCC 51484 / DSM 6875 / VKM B-1610 / KT).